The chain runs to 180 residues: Small ribosomal subunit protein bS16 (180 aa).

Belongs to the bacterial ribosomal protein bS16 family.

The sequence is that of Small ribosomal subunit protein bS16 from Flavobacterium psychrophilum (strain ATCC 49511 / DSM 21280 / CIP 103535 / JIP02/86).